The sequence spans 164 residues: UPF0304 protein YfbU (164 aa).

This sequence belongs to the UPF0304 family.

This Escherichia coli O127:H6 (strain E2348/69 / EPEC) protein is UPF0304 protein YfbU.